Consider the following 1164-residue polypeptide: Integrin alpha-5 (1164 aa).

Residues 1 to 14 (MREEGGGSREKEGE) are compositionally biased toward basic and acidic residues. Residues 1–119 (MREEGGGSRE…MGSRTPGSPL (119 aa)) form a disordered region. Positions 81–90 (LLPALSHSPL) are enriched in low complexity. One copy of the FG-GAP 1 repeat lies at 156–221 (NLDAEAPAVL…CPWGTSPAQC (66 aa)). Asparagine 197 carries an N-linked (GlcNAc...) asparagine glycan. Cysteines 212 and 221 form a disulfide. Serine 240 bears the Phosphoserine mark. FG-GAP repeat units lie at residues 241–301 (SEGE…QILE), 306–358 (RSDF…AESY), 372–424 (QTRQ…GSDI), 425–490 (RSLY…GMEP), 491–550 (TPTL…GLAS), and 554–617 (QVLL…IFPA). Cysteine 269 and cysteine 289 are oxidised to a cystine. An N-linked (GlcNAc...) asparagine glycan is attached at asparagine 295. A disulfide bridge connects residues cysteine 305 and cysteine 318. A protein is bound by residues glutamine 375 and aspartate 382. Ca(2+)-binding residues include glutamate 393, serine 395, aspartate 397, and aspartate 401. N-linked (GlcNAc...) asparagine glycans are attached at residues asparagine 410, asparagine 420, and asparagine 429. Positions 447, 449, 451, 453, 455, 514, 516, 518, 520, 522, 578, 580, 582, 584, and 586 each coordinate Ca(2+). Cysteine 626 and cysteine 635 form a disulfide bridge. N-linked (GlcNAc...) asparagine glycosylation is found at asparagine 637, asparagine 643, asparagine 706, and asparagine 722. Cysteine 641 and cysteine 697 are oxidised to a cystine. Residues cysteine 758 and cysteine 764 are joined by a disulfide bond. 5 N-linked (GlcNAc...) asparagine glycosylation sites follow: asparagine 788, asparagine 825, asparagine 837, asparagine 886, and asparagine 982. A disulfide bridge links cysteine 831 with cysteine 844. 3 disulfides stabilise this stretch: cysteine 962–cysteine 1072, cysteine 983–cysteine 1036, and cysteine 1026–cysteine 1031. The disordered stretch occupies residues 983-1022 (CTTSHPPNPEGLELDPEGSQHHRLQRRDVPGRSPASSGPQ). The chain crosses the membrane as a helical span at residues 1114–1134 (LWIIILAILIGLLLLGLLIYI). Over 1135 to 1164 (LYKLGFFKRSLPYGTAMEKAQLKPPATSDA) the chain is Cytoplasmic. The segment at 1136–1143 (YKLGFFKR) is interaction with HPS5. Positions 1139–1143 (GFFKR) match the GFFKR motif motif.

This sequence belongs to the integrin alpha chain family. Heterodimer of an alpha and a beta subunit. The alpha subunit is composed of a heavy and a light chain linked by a disulfide bond. Alpha-5 associates with beta-1. Interacts with NISCH. Interacts with HPS5. Interacts with RAB21 and COMP. Interacts with CIB1. ITGA5:ITGB1 interacts with CCN3. ITGA5:ITGB1 interacts with FBN1. ITGA5:ITGB1 interacts with IL1B. ITGA5:ITGB1 interacts with ACE2. ITGA5:ITGB1 interacts with SELP. Interacts with ANGPT2. ITGA5:ITGB1 interacts with IGFBP2. ITGA5:ITGB1 interacts with IGFBP1. Post-translationally, proteolytic cleavage by PCSK5 mediates activation of the precursor.

It is found in the cell membrane. It localises to the cell junction. Its subcellular location is the focal adhesion. Its function is as follows. Integrin alpha-5/beta-1 (ITGA5:ITGB1) is a receptor for fibronectin and fibrinogen. It recognizes the sequence R-G-D in its ligands. ITGA5:ITGB1 binds to PLA2G2A via a site (site 2) which is distinct from the classical ligand-binding site (site 1) and this induces integrin conformational changes and enhanced ligand binding to site 1. ITGA5:ITGB1 acts as a receptor for fibrillin-1 (FBN1) and mediates R-G-D-dependent cell adhesion to FBN1. ITGA5:ITGB1 acts as a receptor for fibronectin (FN1) and mediates R-G-D-dependent cell adhesion to FN1. ITGA5:ITGB1 is a receptor for IL1B and binding is essential for IL1B signaling. ITGA5:ITGB3 is a receptor for soluble CD40LG and is required for CD40/CD40LG signaling. The sequence is that of Integrin alpha-5 (ITGA5) from Bos taurus (Bovine).